Here is a 398-residue protein sequence, read N- to C-terminus: tRNA-specific 2-thiouridylase MnmA (398 aa).

Residues 20–27 and L46 contribute to the ATP site; that span reads AMSGGVDS. C114 serves as the catalytic Nucleophile. A disulfide bridge links C114 with C210. G138 lines the ATP pocket. An interaction with tRNA region spans residues 160-162; sequence RDQ. C210 serves as the catalytic Cysteine persulfide intermediate.

The protein belongs to the MnmA/TRMU family.

The protein localises to the cytoplasm. It catalyses the reaction S-sulfanyl-L-cysteinyl-[protein] + uridine(34) in tRNA + AH2 + ATP = 2-thiouridine(34) in tRNA + L-cysteinyl-[protein] + A + AMP + diphosphate + H(+). In terms of biological role, catalyzes the 2-thiolation of uridine at the wobble position (U34) of tRNA, leading to the formation of s(2)U34. In Brucella suis (strain ATCC 23445 / NCTC 10510), this protein is tRNA-specific 2-thiouridylase MnmA.